The primary structure comprises 66 residues: MIALAYLATVAIAAMVLAVALRRRPTPTNPPAPAPAPALAAVDGGAEIRVILAATHQLAARLSTAA.

Residues 1-20 (MIALAYLATVAIAAMVLAVA) form a hydrophobic region.

This is an uncharacterized protein from Streptomyces lividans.